The chain runs to 471 residues: Glutamate--tRNA ligase (471 aa).

The 'HIGH' region signature appears at 10–20 (PSPTGYLHIGG). Positions 107, 109, 134, and 136 each coordinate Zn(2+). Residues 244 to 248 (RLSKR) carry the 'KMSKS' region motif. Lys-247 is a binding site for ATP.

Belongs to the class-I aminoacyl-tRNA synthetase family. Glutamate--tRNA ligase type 1 subfamily. In terms of assembly, monomer. Zn(2+) is required as a cofactor.

It is found in the cytoplasm. The enzyme catalyses tRNA(Glu) + L-glutamate + ATP = L-glutamyl-tRNA(Glu) + AMP + diphosphate. Functionally, catalyzes the attachment of glutamate to tRNA(Glu) in a two-step reaction: glutamate is first activated by ATP to form Glu-AMP and then transferred to the acceptor end of tRNA(Glu). The chain is Glutamate--tRNA ligase from Anaeromyxobacter sp. (strain Fw109-5).